Consider the following 62-residue polypeptide: uncharacterized protein (62 aa).

This is an uncharacterized protein from Saccharomyces cerevisiae (strain ATCC 204508 / S288c) (Baker's yeast).